The primary structure comprises 21 residues: Thylakoid lumenal 13.8 kDa protein (21 aa).

Its subcellular location is the plastid. It is found in the chloroplast thylakoid lumen. This Spinacia oleracea (Spinach) protein is Thylakoid lumenal 13.8 kDa protein.